The sequence spans 247 residues: Eukaryotic translation initiation factor 6-1 (247 aa).

It belongs to the eIF-6 family. Monomer. Associates with the 60S ribosomal subunit.

It is found in the cytoplasm. Its subcellular location is the nucleus. The protein resides in the nucleolus. Binds to the 60S ribosomal subunit and prevents its association with the 40S ribosomal subunit to form the 80S initiation complex in the cytoplasm. May also be involved in ribosome biogenesis. The polypeptide is Eukaryotic translation initiation factor 6-1 (Arabidopsis thaliana (Mouse-ear cress)).